A 61-amino-acid polypeptide reads, in one-letter code: Large ribosomal subunit protein bL32 (61 aa).

Over residues 1–22 the composition is skewed to basic residues; that stretch reads MAVPKKKTSRARRDRRRSHHAL. The tract at residues 1 to 24 is disordered; it reads MAVPKKKTSRARRDRRRSHHALRG.

It belongs to the bacterial ribosomal protein bL32 family.

In Rubrobacter xylanophilus (strain DSM 9941 / JCM 11954 / NBRC 16129 / PRD-1), this protein is Large ribosomal subunit protein bL32.